Consider the following 158-residue polypeptide: S-ribosylhomocysteine lyase (158 aa).

The Fe cation site is built by H54, H58, and C125.

It belongs to the LuxS family. In terms of assembly, homodimer. Requires Fe cation as cofactor.

It catalyses the reaction S-(5-deoxy-D-ribos-5-yl)-L-homocysteine = (S)-4,5-dihydroxypentane-2,3-dione + L-homocysteine. Functionally, involved in the synthesis of autoinducer 2 (AI-2) which is secreted by bacteria and is used to communicate both the cell density and the metabolic potential of the environment. The regulation of gene expression in response to changes in cell density is called quorum sensing. Catalyzes the transformation of S-ribosylhomocysteine (RHC) to homocysteine (HC) and 4,5-dihydroxy-2,3-pentadione (DPD). The chain is S-ribosylhomocysteine lyase from Lactococcus lactis subsp. cremoris (strain MG1363).